The sequence spans 369 residues: 3,7-dimethylxanthine N-methyltransferase TCS1 (369 aa).

Tyr-24 contributes to the S-adenosyl-L-homocysteine binding site. Residue Thr-31 participates in caffeine binding. S-adenosyl-L-homocysteine contacts are provided by Cys-66, Asn-71, Asp-103, Leu-104, Ser-138, and Phe-139. Residues Tyr-156, His-159, and Trp-160 each coordinate caffeine. Asn-177 provides a ligand contact to Mg(2+). Residue Arg-225 participates in caffeine binding. The Mg(2+) site is built by Asp-263, Phe-265, and Asn-266. Phe-321 contacts caffeine.

It belongs to the methyltransferase superfamily. Type-7 methyltransferase family. Mg(2+) serves as cofactor. Expressed in young leaves and flowers.

The enzyme catalyses 7-methylxanthine + S-adenosyl-L-methionine = theobromine + S-adenosyl-L-homocysteine + H(+). It carries out the reaction theobromine + S-adenosyl-L-methionine = caffeine + S-adenosyl-L-homocysteine + H(+). The catalysed reaction is 1,7-dimethylxanthine + S-adenosyl-L-methionine = caffeine + S-adenosyl-L-homocysteine + H(+). Its pathway is alkaloid biosynthesis. Functionally, involved in the biosynthesis of caffeine. Catalyzes the conversion of 7-methylxanthine (7mX) to theobromine and of theobromine to caffeine. Has 3-N- and 1-N-methylation activity. The sequence is that of 3,7-dimethylxanthine N-methyltransferase TCS1 from Camellia sinensis (Tea plant).